A 215-amino-acid polypeptide reads, in one-letter code: Small ribosomal subunit protein uS7 (215 aa).

This sequence belongs to the universal ribosomal protein uS7 family. Part of the 30S ribosomal subunit.

One of the primary rRNA binding proteins, it binds directly to 16S rRNA where it nucleates assembly of the head domain of the 30S subunit. Is located at the subunit interface close to the decoding center. This chain is Small ribosomal subunit protein uS7, found in Pyrococcus abyssi (strain GE5 / Orsay).